Consider the following 232-residue polypeptide: Enterobactin synthase component D (232 aa).

Aspartate 106, glutamate 108, and glutamate 150 together coordinate Mg(2+).

This sequence belongs to the P-Pant transferase superfamily. EntD family. As to quaternary structure, entB, EntD, EntE, and EntF form a multienzyme complex called enterobactin synthase. Mg(2+) is required as a cofactor.

The protein resides in the membrane. The catalysed reaction is apo-[aryl-carrier protein] + CoA = holo-[aryl-carrier protein] + adenosine 3',5'-bisphosphate + H(+). The enzyme catalyses apo-[peptidyl-carrier protein] + CoA = holo-[peptidyl-carrier protein] + adenosine 3',5'-bisphosphate + H(+). It participates in siderophore biosynthesis; enterobactin biosynthesis. In terms of biological role, involved in the biosynthesis of the siderophore enterobactin (enterochelin), which is a macrocyclic trimeric lactone of N-(2,3-dihydroxybenzoyl)-serine. The serine trilactone serves as a scaffolding for the three catechol functionalities that provide hexadentate coordination for the tightly ligated iron(2+) atoms. Plays an essential role in the assembly of the enterobactin by catalyzing the transfer of the 4'-phosphopantetheine (Ppant) moiety from coenzyme A to the apo-domains of both EntB (ArCP domain) and EntF (PCP domain) to yield their holo-forms which make them competent for the activation of 2,3-dihydroxybenzoate (DHB) and L-serine, respectively. In Salmonella austin, this protein is Enterobactin synthase component D.